A 389-amino-acid polypeptide reads, in one-letter code: 23S rRNA (uracil(747)-C(5))-methyltransferase RlmC (389 aa).

Positions 12, 20, 23, and 99 each coordinate [4Fe-4S] cluster. 4 residues coordinate S-adenosyl-L-methionine: Gln224, Phe253, Glu274, and Asn321. Catalysis depends on Cys348, which acts as the Nucleophile.

It belongs to the class I-like SAM-binding methyltransferase superfamily. RNA M5U methyltransferase family. RlmC subfamily.

The catalysed reaction is uridine(747) in 23S rRNA + S-adenosyl-L-methionine = 5-methyluridine(747) in 23S rRNA + S-adenosyl-L-homocysteine + H(+). Catalyzes the formation of 5-methyl-uridine at position 747 (m5U747) in 23S rRNA. In Shewanella sp. (strain W3-18-1), this protein is 23S rRNA (uracil(747)-C(5))-methyltransferase RlmC.